We begin with the raw amino-acid sequence, 123 residues long: Small ribosomal subunit protein uS12cz/uS12cy (123 aa).

Belongs to the universal ribosomal protein uS12 family. As to quaternary structure, part of the 30S ribosomal subunit.

It is found in the plastid. It localises to the chloroplast. In terms of biological role, with S4 and S5 plays an important role in translational accuracy. Located at the interface of the 30S and 50S subunits. In Gossypium hirsutum (Upland cotton), this protein is Small ribosomal subunit protein uS12cz/uS12cy (rps12-A).